The sequence spans 598 residues: Beta-galactosidase (598 aa).

A signal peptide spans methionine 1 to alanine 21. Catalysis depends on glutamate 184, which acts as the Proton donor. Glutamate 260 functions as the Nucleophile in the catalytic mechanism.

The protein belongs to the glycosyl hydrolase 35 family.

It catalyses the reaction Hydrolysis of terminal non-reducing beta-D-galactose residues in beta-D-galactosides.. Preferentially hydrolyzes beta(1-&gt;3) galactosyl linkages over beta(1-&gt;4) linkages. This Xanthomonas manihotis protein is Beta-galactosidase (bga).